A 55-amino-acid polypeptide reads, in one-letter code: Large ribosomal subunit protein bL33 (55 aa).

The protein belongs to the bacterial ribosomal protein bL33 family.

This chain is Large ribosomal subunit protein bL33, found in Aeromonas hydrophila subsp. hydrophila (strain ATCC 7966 / DSM 30187 / BCRC 13018 / CCUG 14551 / JCM 1027 / KCTC 2358 / NCIMB 9240 / NCTC 8049).